The following is a 212-amino-acid chain: Adenylate kinase (212 aa).

10 to 15 (GAGKGT) contacts ATP. Residues 30-59 (STGDMFRAAMVNQTEMGVLAKSYIDKGELV) are NMP. AMP is bound by residues threonine 31, arginine 36, 57–59 (ELV), 86–89 (GYPR), and glutamine 93. The LID stretch occupies residues 127–159 (GRIIHRVTGETFHKVFNPPVDYKEEDYYQREDD). ATP is bound by residues arginine 128 and 137–138 (TF). Arginine 156 and arginine 167 together coordinate AMP. Glutamine 195 is an ATP binding site.

This sequence belongs to the adenylate kinase family. As to quaternary structure, monomer.

It is found in the cytoplasm. It catalyses the reaction AMP + ATP = 2 ADP. It participates in purine metabolism; AMP biosynthesis via salvage pathway; AMP from ADP: step 1/1. Catalyzes the reversible transfer of the terminal phosphate group between ATP and AMP. Plays an important role in cellular energy homeostasis and in adenine nucleotide metabolism. In Streptococcus pneumoniae (strain 70585), this protein is Adenylate kinase.